A 420-amino-acid polypeptide reads, in one-letter code: Serine hydroxymethyltransferase (420 aa).

Residues Leu-121 and 125–127 (GHL) each bind (6S)-5,6,7,8-tetrahydrofolate. N6-(pyridoxal phosphate)lysine is present on Lys-229.

The protein belongs to the SHMT family. Homodimer. It depends on pyridoxal 5'-phosphate as a cofactor.

The protein resides in the cytoplasm. The catalysed reaction is (6R)-5,10-methylene-5,6,7,8-tetrahydrofolate + glycine + H2O = (6S)-5,6,7,8-tetrahydrofolate + L-serine. It participates in one-carbon metabolism; tetrahydrofolate interconversion. Its pathway is amino-acid biosynthesis; glycine biosynthesis; glycine from L-serine: step 1/1. In terms of biological role, catalyzes the reversible interconversion of serine and glycine with tetrahydrofolate (THF) serving as the one-carbon carrier. This reaction serves as the major source of one-carbon groups required for the biosynthesis of purines, thymidylate, methionine, and other important biomolecules. Also exhibits THF-independent aldolase activity toward beta-hydroxyamino acids, producing glycine and aldehydes, via a retro-aldol mechanism. This is Serine hydroxymethyltransferase from Pasteurella multocida (strain Pm70).